The following is a 797-amino-acid chain: Striatin-3 (797 aa).

Met1 bears the N-acetylmethionine mark. Composition is skewed to gly residues over residues 1–13 and 23–43; these read MDELAGGGGGGPG and GPGGNLGLSPGGNGAAGGGGP. Residues 1–60 are disordered; it reads MDELAGGGGGGPGMAAPPRQQQGPGGNLGLSPGGNGAAGGGGPPASEGAGPAAGPELSRP. Positions 44–56 are enriched in low complexity; sequence PASEGAGPAAGPE. The tract at residues 71–79 is caveolin-binding; sequence YIQHEWARF. Residues 77–136 are a coiled coil; the sequence is ARFEMERAHWEVERAELQARIAFLQGERKGQENLKKDLVRRIKMLEYALKQERAKYHKLK. Thr150 bears the Phosphothreonine mark. The segment at 166–183 is calmodulin-binding; the sequence is QNSQLTWKQGRQLLRQYL. A phosphoserine mark is found at Ser202, Ser214, and Ser229. 2 disordered regions span residues 224–278 and 313–338; these read LNGG…KHRM and DGEGAGEARSSGDGTEWDKDDLSPTA. Basic and acidic residues predominate over residues 230–241; that stretch reads PKQKGQEIKRSS. Positions 253–265 are enriched in acidic residues; it reads NADDSDEDEENDM. Ser257 and Ser335 each carry phosphoserine. WD repeat units follow at residues 478–517, 531–570, 584–623, 679–718, 721–760, and 767–797; these read SHFDGVRALAFHPVEPVLVTASEDHTLKLWNLQKTVPAKK, AHIGPVLSLAISSNGEQCFSGGIDATIQWWNMPSPSVDPY, GHTDAVWGLAYSGIKNQLLSCSADGTVRLWNPQEKLPCIC, QSNNHINRVVSHPTLPVTITAHEDRHIKFFDNKTGKMIHS, AHLDAVTSLAVDPNGIYLMSGSHDCSIRLWNLDSKTCVQE, and KLDESIYDVAFHSSKAYIASAGADALAKVFV.

Belongs to the WD repeat striatin family. Tetramerizes. Part of the core of STRIPAK complexes composed of PP2A catalytic and scaffolding subunits, the striatins (PP2A regulatory subunits), the striatin-associated proteins MOB4, STRIP1 and STRIP2, PDCD10 and members of the STE20 kinases, such as STK24 and STK26. The STRIPAK complex can be extended by adapter proteins such as SLMAP:SIKE1 or CTTNBP2NL. Interacts with CDC42BPB.

It is found in the cytoplasm. The protein localises to the membrane. Functionally, calmodulin-binding scaffolding protein which is the center of the striatin-interacting phosphatase and kinase (STRIPAK) complexes. STRIPAK complexes have critical roles in protein (de)phosphorylation and are regulators of multiple signaling pathways including Hippo, MAPK, nuclear receptor and cytoskeleton remodeling. Different types of STRIPAK complexes are involved in a variety of biological processes such as cell growth, differentiation, apoptosis, metabolism and immune regulation. The protein is Striatin-3 of Homo sapiens (Human).